The following is a 345-amino-acid chain: Protein RecA (345 aa).

ATP is bound at residue 80–87 (GPESSGKT).

It belongs to the RecA family.

Its subcellular location is the cytoplasm. In terms of biological role, can catalyze the hydrolysis of ATP in the presence of single-stranded DNA, the ATP-dependent uptake of single-stranded DNA by duplex DNA, and the ATP-dependent hybridization of homologous single-stranded DNAs. It interacts with LexA causing its activation and leading to its autocatalytic cleavage. The sequence is that of Protein RecA from Mycoplasma mycoides subsp. mycoides SC (strain CCUG 32753 / NCTC 10114 / PG1).